Here is a 123-residue protein sequence, read N- to C-terminus: Small ribosomal subunit protein uS12cz/uS12cy/uS12cx/uS12w (123 aa).

Residues 1–13 (MPTSNQLLRNSRQ) are compositionally biased toward polar residues. Residues 1 to 30 (MPTSNQLLRNSRQPVRKTKKTPALRGCPQR) form a disordered region. Positions 14 to 30 (PVRKTKKTPALRGCPQR) are enriched in basic residues.

The protein belongs to the universal ribosomal protein uS12 family. As to quaternary structure, part of the 30S ribosomal subunit.

Its subcellular location is the plastid. The protein resides in the chloroplast. With S4 and S5 plays an important role in translational accuracy. Located at the interface of the 30S and 50S subunits. This Pelargonium hortorum (Common geranium) protein is Small ribosomal subunit protein uS12cz/uS12cy/uS12cx/uS12w (rps12-A).